Here is a 349-residue protein sequence, read N- to C-terminus: Draxin (349 aa).

Residues 1-25 (MAGPAIHTAPMLFLVLLLPLELSLA) form the signal peptide. Disordered regions lie at residues 38–79 (PENH…QDGA), 118–145 (PYPE…RRDR), and 244–273 (DGWP…EGEP). Positions 120-131 (PEKENRPPGWER) are enriched in basic and acidic residues. 2 stretches are compositionally biased toward basic residues: residues 132–145 (TRKR…RRDR) and 249–258 (AKKKEKHRGK). Asn-264 carries N-linked (GlcNAc...) asparagine glycosylation.

It belongs to the draxin family. Interacts with LRP6.

Its subcellular location is the secreted. Chemorepulsive axon guidance protein required for the development of spinal cord and forebrain commissures. Acts as a chemorepulsive guidance protein for commissural axons during development. Able to inhibit or repel neurite outgrowth from dorsal spinal cord. Inhibits the stabilization of cytosolic beta-catenin (CTNNB1) via its interaction with LRP6, thereby acting as an antagonist of Wnt signaling pathway. The chain is Draxin from Homo sapiens (Human).